We begin with the raw amino-acid sequence, 78 residues long: Defensin-like protein 281 (78 aa).

Positions 1–23 (MASTKYLVLLFICLSVLLTPGLG) are cleaved as a signal peptide. Intrachain disulfides connect Cys37–Cys60, Cys46–Cys72, and Cys50–Cys74.

The protein belongs to the DEFL family.

The protein resides in the secreted. The chain is Defensin-like protein 281 from Arabidopsis thaliana (Mouse-ear cress).